A 286-amino-acid chain; its full sequence is Diaminopimelate epimerase (286 aa).

Residues asparagine 13 and asparagine 66 each contribute to the substrate site. Residue cysteine 75 is the Proton donor of the active site. Residues 76–77, asparagine 165, asparagine 198, and 216–217 contribute to the substrate site; these read GN and ER. Cysteine 225 functions as the Proton acceptor in the catalytic mechanism. 226 to 227 is a substrate binding site; the sequence is GT.

It belongs to the diaminopimelate epimerase family. Homodimer.

Its subcellular location is the cytoplasm. The catalysed reaction is (2S,6S)-2,6-diaminopimelate = meso-2,6-diaminopimelate. The protein operates within amino-acid biosynthesis; L-lysine biosynthesis via DAP pathway; DL-2,6-diaminopimelate from LL-2,6-diaminopimelate: step 1/1. Catalyzes the stereoinversion of LL-2,6-diaminopimelate (L,L-DAP) to meso-diaminopimelate (meso-DAP), a precursor of L-lysine and an essential component of the bacterial peptidoglycan. This Thermosynechococcus vestitus (strain NIES-2133 / IAM M-273 / BP-1) protein is Diaminopimelate epimerase.